Consider the following 361-residue polypeptide: MKPSIHSLAHQTMQEWVLEQGEKKFRADQIWEWLYRKRVQSFEEMTNLSKDLIAKLNDQFVVNPLKQRIVQESADGTVKYLFELPDGMLIETVLMRQHYGLSVCVTTQVDCNIGCTFCASDLIKKQRDLNNGEIVAQIMLVQKYFAERGQDERVSHIVVMGIGEPFDNYNNVLNFVCTINDDKGMAIGARHITVSTSGLAHKIRNFADEGVQVNLAVSLHAPNNELRSSIMKINRAFPIEKLFAAIEYYIETTNRRVTFEYIMLNEVNDSVEQALELAELLKNIKKLSYVNLIPYNPVSEHDQYSRSPKERVLAFYDTLKKKGGNCVVRQEYGTDIDAACGQLRSNTMKRDRQKAVAEVNP.

Glutamate 91 (proton acceptor) is an active-site residue. The Radical SAM core domain occupies 97 to 329 (QHYGLSVCVT…KKKGGNCVVR (233 aa)). The cysteines at positions 104 and 340 are disulfide-linked. The [4Fe-4S] cluster site is built by cysteine 111, cysteine 115, and cysteine 118. S-adenosyl-L-methionine is bound by residues 163 to 164 (GE), serine 195, 218 to 220 (SLH), and asparagine 296. Cysteine 340 serves as the catalytic S-methylcysteine intermediate.

It belongs to the radical SAM superfamily. RlmN family. [4Fe-4S] cluster is required as a cofactor.

Its subcellular location is the cytoplasm. It carries out the reaction adenosine(2503) in 23S rRNA + 2 reduced [2Fe-2S]-[ferredoxin] + 2 S-adenosyl-L-methionine = 2-methyladenosine(2503) in 23S rRNA + 5'-deoxyadenosine + L-methionine + 2 oxidized [2Fe-2S]-[ferredoxin] + S-adenosyl-L-homocysteine. The catalysed reaction is adenosine(37) in tRNA + 2 reduced [2Fe-2S]-[ferredoxin] + 2 S-adenosyl-L-methionine = 2-methyladenosine(37) in tRNA + 5'-deoxyadenosine + L-methionine + 2 oxidized [2Fe-2S]-[ferredoxin] + S-adenosyl-L-homocysteine. Functionally, specifically methylates position 2 of adenine 2503 in 23S rRNA and position 2 of adenine 37 in tRNAs. The protein is Probable dual-specificity RNA methyltransferase RlmN of Streptococcus pneumoniae serotype 2 (strain D39 / NCTC 7466).